Consider the following 345-residue polypeptide: tRNA N6-adenosine threonylcarbamoyltransferase (345 aa).

Residues His-111 and His-115 each coordinate Fe cation. Substrate contacts are provided by residues 134 to 138, Asp-167, Gly-180, and Asn-276; that span reads LVSGG. Asp-304 is a Fe cation binding site.

It belongs to the KAE1 / TsaD family. Fe(2+) is required as a cofactor.

Its subcellular location is the cytoplasm. It carries out the reaction L-threonylcarbamoyladenylate + adenosine(37) in tRNA = N(6)-L-threonylcarbamoyladenosine(37) in tRNA + AMP + H(+). In terms of biological role, required for the formation of a threonylcarbamoyl group on adenosine at position 37 (t(6)A37) in tRNAs that read codons beginning with adenine. Is involved in the transfer of the threonylcarbamoyl moiety of threonylcarbamoyl-AMP (TC-AMP) to the N6 group of A37, together with TsaE and TsaB. TsaD likely plays a direct catalytic role in this reaction. This Bordetella avium (strain 197N) protein is tRNA N6-adenosine threonylcarbamoyltransferase.